Consider the following 181-residue polypeptide: Malignant T-cell-amplified sequence 2 (181 aa).

The PUA domain maps to 92–171; sequence LPHQQVDKGA…IGIENIHYLN (80 aa).

Belongs to the MCTS1 family.

It localises to the cytoplasm. The protein is Malignant T-cell-amplified sequence 2 of Mus musculus (Mouse).